A 144-amino-acid polypeptide reads, in one-letter code: MRQTTIVNKENSNKKWFVVDAENQVLGRLASLVASVLRGKTKPTFTPNADMGDNVIIINAEKVKLTGKKEKNKVYYSHSGYPGGLKARTAEKLREEKPTALLEKAISGMIPHTKLGNQQRKNLYVYAGPEHKHQAQNPERLEVK.

It belongs to the universal ribosomal protein uL13 family. Part of the 50S ribosomal subunit.

This protein is one of the early assembly proteins of the 50S ribosomal subunit, although it is not seen to bind rRNA by itself. It is important during the early stages of 50S assembly. In Mycoplasmopsis synoviae (strain 53) (Mycoplasma synoviae), this protein is Large ribosomal subunit protein uL13.